We begin with the raw amino-acid sequence, 234 residues long: Peroxiredoxin-2E, chloroplastic (234 aa).

The N-terminal 70 residues, 1–70, are a transit peptide targeting the chloroplast; that stretch reads MATSLSVSRF…TRSFATTPVT (70 aa). Residues 73-234 enclose the Thioredoxin domain; it reads ISVGDKLPDS…SSAEDMLKAL (162 aa). Phosphoserine is present on serine 82. Residue cysteine 121 is the Cysteine sulfenic acid (-SOH) intermediate of the active site.

The protein belongs to the peroxiredoxin family. Prx5 subfamily. In terms of assembly, monomer. Expressed in all tissues but predominantly in buds, siliques and seeds.

The protein localises to the plastid. The protein resides in the chloroplast stroma. The enzyme catalyses [glutaredoxin]-dithiol + a hydroperoxide = [glutaredoxin]-disulfide + an alcohol + H2O. Thiol-specific peroxidase that catalyzes the reduction of hydrogen peroxide and organic hydroperoxides to water and alcohols, respectively. Plays a role in cell protection against oxidative stress by detoxifying peroxides. May be involved in chloroplast redox homeostasis. In Arabidopsis thaliana (Mouse-ear cress), this protein is Peroxiredoxin-2E, chloroplastic (PRXIIE).